An 881-amino-acid chain; its full sequence is Sodium/potassium/calcium exchanger Nckx30C (881 aa).

The Extracellular segment spans residues 1 to 194 (MLQPTTCSKQ…SRCRSRRCLR (194 aa)). Asn69 carries an N-linked (GlcNAc...) asparagine glycan. 4 disordered regions span residues 79–111 (DMLS…APSD), 149–181 (AKTR…LLHP), 215–255 (AAKP…TSGE), and 272–315 (GLEE…TTKT). A compositionally biased stretch (polar residues) spans 85–95 (RSRSSSTTIDF). The span at 149-175 (AKTRSRTAAQLPATSAASATSSRGASA) shows a compositional bias: low complexity. The chain crosses the membrane as a helical span at residues 195 to 215 (LPIYSILLLCLTTQGLGLGDA). The Cytoplasmic portion of the chain corresponds to 216-330 (AKPRPAKQHF…DLFTKEQLEN (115 aa)). Residues 228–240 (SNSNSPNQNQNHN) are compositionally biased toward low complexity. Over residues 296 to 315 (AGNQRGINDTHNDNSTTTKT) the composition is skewed to polar residues. A helical transmembrane segment spans residues 331–351 (GAVILHIIGVIYMFVALAIVC). The Extracellular portion of the chain corresponds to 352–375 (DEFFVPSLDVIIEKLGITDDVAGA). The stretch at 372–412 (VAGATFMAAGGSAPELFTSVIGVFVSFDDVGIGTIVGSAVF) is one Alpha-1 repeat. The chain crosses the membrane as a helical span at residues 376 to 396 (TFMAAGGSAPELFTSVIGVFV). Residues 397-402 (SFDDVG) lie on the Cytoplasmic side of the membrane. Residues 403 to 423 (IGTIVGSAVFNILFVIGMCAL) traverse the membrane as a helical segment. Residues 424–433 (FSKTVLSLTW) lie on the Extracellular side of the membrane. Residues 434-454 (WPLFRDCSFYSISLLVLIYFF) traverse the membrane as a helical segment. The Cytoplasmic portion of the chain corresponds to 455 to 458 (RDNR). Residues 459-479 (IFWWEALILFTIYIGYVAFMK) form a helical membrane-spanning segment. The Extracellular segment spans residues 480 to 720 (WNVQVETCVK…PDTRTPRGKR (241 aa)). The segment at 508 to 565 (PAGNAANSSETSMATQPGGSVTSRAASETRSGPPGSSNAGATGNSSGGGGTSGSTQTG) is disordered. Over residues 512 to 537 (AANSSETSMATQPGGSVTSRAASETR) the composition is skewed to polar residues. Asn514 and Asn551 each carry an N-linked (GlcNAc...) asparagine glycan. The segment covering 542–551 (GSSNAGATGN) has biased composition (low complexity). A helical membrane pass occupies residues 721–741 (FFPVTFIGSIVWIAAFSYLMV). The Cytoplasmic segment spans residues 742–756 (WWANVAGDTARIPPE). The helical transmembrane segment at 757-777 (VMGLTFLAAGTSIPDLITSVI) threads the bilayer. The stretch at 764–795 (AAGTSIPDLITSVIVARKGFGDMAVSSSVGSN) is one Alpha-2 repeat. Residues 778-795 (VARKGFGDMAVSSSVGSN) lie on the Extracellular side of the membrane. Residues 796-816 (IFDVTVGLPIPWLLYGIIYGA) form a helical membrane-spanning segment. Residues 817–822 (PVEVNS) lie on the Cytoplasmic side of the membrane. The chain crosses the membrane as a helical span at residues 823 to 843 (VGMVCSITILFMMLVFVVMSI). Topologically, residues 844–852 (ACFRWRMNK) are extracellular. The helical transmembrane segment at 853–873 (GLGFTMFLLYFAFVAVSLMFE) threads the bilayer. The Cytoplasmic segment spans residues 874–881 (YDVITCPF).

The protein belongs to the Ca(2+):cation antiporter (CaCA) (TC 2.A.19) family. SLC24A subfamily. In terms of tissue distribution, expressed in the adult nervous system. Expressed in the photoreceptor cells as well as in the lamina, medulla, and optic lobes of the brain.

It localises to the membrane. In terms of biological role, may function in the removal and maintenance of calcium homeostasis during signaling in the adult and in signaling events during embryogenesis and patterning of imaginal disks. Transports one Ca(2+) and 1 K(+) in exchange for 4 Na(+). This Drosophila melanogaster (Fruit fly) protein is Sodium/potassium/calcium exchanger Nckx30C (Nckx30C).